Here is a 441-residue protein sequence, read N- to C-terminus: Mitochondrial inner membrane protein OXA1L (441 aa).

The Mitochondrial intermembrane segment spans residues 1–113 (MALALMCGRR…QAAAEQSFAE (113 aa)). A helical membrane pass occupies residues 114-134 (LGLGSYTPVGLIQNLLEFMHV). Residues 135 to 139 (NLGLP) lie on the Mitochondrial matrix side of the membrane. The chain crosses the membrane as a helical span at residues 140 to 160 (WWGAIAACTVLARCLVFPLIV). Over 161 to 212 (KGQREAAKIHNHLPEIQKFSARIREAKLTGNHTEFYRASSEMTFYQKKHDIK) the chain is Mitochondrial intermembrane. The helical transmembrane segment at 213-233 (LFRPLILPLTQAPIFISFFIA) threads the bilayer. The Mitochondrial matrix segment spans residues 234 to 260 (LREMANLPVPSLQTGGLWWFQDLTLSD). The chain crosses the membrane as a helical span at residues 261–281 (PIYVLPLVVTATMWGVLELGA). Topologically, residues 282–298 (ETGMQSSDLQWMRNFIR) are mitochondrial intermembrane. Residues 299-319 (LMPLAVLPITIHFPTAVFMYW) traverse the membrane as a helical segment. Topologically, residues 320–441 (LSSNMFSLGQ…SKQPWRDTLG (122 aa)) are mitochondrial matrix. Position 364 is a phosphoserine (S364). A Phosphothreonine modification is found at T400. The interval 405–441 (PLLQHGKNDPPNTPNSSSSSSSSNKAKSKQPWRDTLG) is disordered. Over residues 418–429 (PNSSSSSSSSNK) the composition is skewed to low complexity.

It belongs to the OXA1/ALB3/YidC family. Monomer; predominantly monomeric at low salt concentrations. Homooligomer; predominantly homooligomeric at high salt concentrations. Associates with the mitochondrial ribosome. Associates preferentially as a dimer with the large ribosomal subunit 39S of the mitochondrial ribosome. Interacts with OXA1L; promoting cotranslational quality control in mitochondria.

The protein resides in the mitochondrion inner membrane. Its function is as follows. Mitochondrial membrane insertase that mediates the cotranslational insertion of integral membrane proteins into the mitochondrial inner membrane. Essential for the activity and assembly of cytochrome oxidase. Required for the correct biogenesis of ATP synthase and complex I in mitochondria. This chain is Mitochondrial inner membrane protein OXA1L (OXA1L), found in Bos taurus (Bovine).